The following is a 425-amino-acid chain: GTPase Obg (425 aa).

The Obg domain maps to 1–158 (MFIDKAKIYV…REIILELKLL (158 aa)). The 173-residue stretch at 159–331 (ADVGLVGFPN…LMAEVSKTLA (173 aa)) folds into the OBG-type G domain. Residues 165-172 (GFPNVGKS), 190-194 (FTTLK), 212-215 (DIPG), 282-285 (NKSD), and 312-314 (SAA) each bind GTP. Residues Ser-172 and Thr-192 each coordinate Mg(2+). Residues 345 to 425 (LFIPEEKRFT…LNDFEFEFVI (81 aa)) form the OCT domain.

It belongs to the TRAFAC class OBG-HflX-like GTPase superfamily. OBG GTPase family. Monomer. The cofactor is Mg(2+).

It is found in the cytoplasm. In terms of biological role, an essential GTPase which binds GTP, GDP and possibly (p)ppGpp with moderate affinity, with high nucleotide exchange rates and a fairly low GTP hydrolysis rate. Plays a role in control of the cell cycle, stress response, ribosome biogenesis and in those bacteria that undergo differentiation, in morphogenesis control. In Clostridium tetani (strain Massachusetts / E88), this protein is GTPase Obg.